Reading from the N-terminus, the 172-residue chain is Single-stranded DNA-binding protein 2 (172 aa).

The region spanning Val6–Gln111 is the SSB domain. The DNA-binding element occupies Trp55–Phe61. The interval Leu113 to Phe172 is disordered. Residues Gln119–Pro153 are compositionally biased toward low complexity. The short motif at Asp167 to Phe172 is the Important for interaction with partner proteins element.

As to quaternary structure, homotetramer.

In terms of biological role, plays an important role in DNA replication, recombination and repair. Binds to ssDNA and to an array of partner proteins to recruit them to their sites of action during DNA metabolism. In Salmonella typhimurium (strain LT2 / SGSC1412 / ATCC 700720), this protein is Single-stranded DNA-binding protein 2 (ssb2).